Here is a 66-residue protein sequence, read N- to C-terminus: Protein translocase subunit SecE (66 aa).

The chain crosses the membrane as a helical span at residues 41-61 (LAVMFIVGFVGFVIYILMEIL).

The protein belongs to the SecE/SEC61-gamma family. As to quaternary structure, component of the Sec protein translocase complex. Heterotrimer consisting of SecY (alpha), SecG (beta) and SecE (gamma) subunits. The heterotrimers can form oligomers, although 1 heterotrimer is thought to be able to translocate proteins. Interacts with the ribosome. May interact with SecDF, and other proteins may be involved.

Its subcellular location is the cell membrane. Functionally, essential subunit of the Sec protein translocation channel SecYEG. Clamps together the 2 halves of SecY. May contact the channel plug during translocation. In Archaeoglobus fulgidus (strain ATCC 49558 / DSM 4304 / JCM 9628 / NBRC 100126 / VC-16), this protein is Protein translocase subunit SecE.